Here is a 268-residue protein sequence, read N- to C-terminus: Phosphoethanolamine/phosphocholine phosphatase (268 aa).

Aspartate 32 functions as the Nucleophile in the catalytic mechanism. Mg(2+)-binding residues include aspartate 32 and aspartate 34. Aspartate 34 (proton donor) is an active-site residue. Aspartate 43 and aspartate 123 together coordinate substrate. Residue aspartate 203 participates in Mg(2+) binding.

The protein belongs to the HAD-like hydrolase superfamily. PHOSPHO family. Mg(2+) is required as a cofactor. As to expression, expressed at sites of mineralization in bone and cartilage. Highly expressed in hypertrophic chondrocytes compared to non-chondrogenic tissues. Expressed in chondrocytes but not in heart, liver, lung, kidney, spleen, muscle, adipose tissues not duodenum. In diaphyseal cortical bone, it is expressed in the osteoid layer of the periosteum, forming surfaces of growing osteons, and newly formed osteocytes, whereas it is not expressed in the endosteum and closed osteons. In growth plate cartilage, it is limited to the early hypertrophic chondrocytes and the ossification groove of Ranvier. Highly expressed on the mineralization surfaces of the cartilage remnants and trabecular bone within the primary spongiosa. Expressed in 17-day-old embryonic calvaria, the osteoid present on the intramembranous and periosteal bone surfaces but not in soft tissues examined.

It is found in the extracellular vesicle. The catalysed reaction is phosphoethanolamine + H2O = ethanolamine + phosphate. It carries out the reaction phosphocholine + H2O = choline + phosphate. In terms of biological role, phosphatase that has a high activity toward phosphoethanolamine (PEA) and phosphocholine (PCho). Involved in the generation of inorganic phosphate for bone mineralization. This Gallus gallus (Chicken) protein is Phosphoethanolamine/phosphocholine phosphatase (PHOSPHO1).